The chain runs to 255 residues: uncharacterized protein (255 aa).

Belongs to the methyltransferase superfamily.

This is an uncharacterized protein from Bacillus subtilis (strain 168).